The primary structure comprises 89 residues: MAHKKAGGSSRNGRDSESKRLGVKKFGGEAVIAGNIIVRQRGTQWHPGSNVGLGKDHTIFALTAGNVDYRTKANGRVYVSVMPKAEAAE.

Residues 1–22 (MAHKKAGGSSRNGRDSESKRLG) form a disordered region.

The protein belongs to the bacterial ribosomal protein bL27 family.

This is Large ribosomal subunit protein bL27 from Rhizobium etli (strain CIAT 652).